A 144-amino-acid chain; its full sequence is Small ribosomal subunit protein eS19A (144 aa).

Residues 83–102 (VNRGMRPSHHRDGSGSVQRK) are disordered.

This sequence belongs to the eukaryotic ribosomal protein eS19 family. As to quaternary structure, component of the small ribosomal subunit (SSU). Mature yeast ribosomes consist of a small (40S) and a large (60S) subunit. The 40S small subunit contains 1 molecule of ribosomal RNA (18S rRNA) and at least 33 different proteins. The large 60S subunit contains 3 rRNA molecules (25S, 5.8S and 5S rRNA) and at least 46 different proteins.

It is found in the cytoplasm. The protein localises to the nucleus. It localises to the nucleolus. Functionally, component of the ribosome, a large ribonucleoprotein complex responsible for the synthesis of proteins in the cell. The small ribosomal subunit (SSU) binds messenger RNAs (mRNAs) and translates the encoded message by selecting cognate aminoacyl-transfer RNA (tRNA) molecules. The large subunit (LSU) contains the ribosomal catalytic site termed the peptidyl transferase center (PTC), which catalyzes the formation of peptide bonds, thereby polymerizing the amino acids delivered by tRNAs into a polypeptide chain. The nascent polypeptides leave the ribosome through a tunnel in the LSU and interact with protein factors that function in enzymatic processing, targeting, and the membrane insertion of nascent chains at the exit of the ribosomal tunnel. eS19 is required for proper maturation of the small (40S) ribosomal subunit. Binds to 40S pre-ribosomal particles, probably required after association of NOC4 but before association of ENP1, TSR1 and RIO2 with 20/21S pre-rRNA. The chain is Small ribosomal subunit protein eS19A (rps1901) from Schizosaccharomyces pombe (strain 972 / ATCC 24843) (Fission yeast).